The sequence spans 190 residues: MKLVIGLGNPESKYSGTRHNVGFDVIDRLSESFQIPFTAGKGKYHFAKINWRNTAIVLLKPMTYMNLSGHAVVAAMNFYKIQRQDILVICDDLNLPSGTLRLRAKGSAGGQNGLKHIIECLGNDEFARMRVGIRLEDQPLSSFSSFVLGKFSEDEKKTMEKILPVCADAALDFSVNGIEHAMNHYNKPAA.

Position 14 (tyrosine 14) interacts with tRNA. Histidine 19 functions as the Proton acceptor in the catalytic mechanism. Tyrosine 64, asparagine 66, and asparagine 112 together coordinate tRNA.

It belongs to the PTH family. In terms of assembly, monomer.

Its subcellular location is the cytoplasm. It catalyses the reaction an N-acyl-L-alpha-aminoacyl-tRNA + H2O = an N-acyl-L-amino acid + a tRNA + H(+). Its function is as follows. Hydrolyzes ribosome-free peptidyl-tRNAs (with 1 or more amino acids incorporated), which drop off the ribosome during protein synthesis, or as a result of ribosome stalling. Catalyzes the release of premature peptidyl moieties from peptidyl-tRNA molecules trapped in stalled 50S ribosomal subunits, and thus maintains levels of free tRNAs and 50S ribosomes. The protein is Peptidyl-tRNA hydrolase of Chlorobium limicola (strain DSM 245 / NBRC 103803 / 6330).